Consider the following 149-residue polypeptide: Nucleoside diphosphate kinase (149 aa).

Lysine 9, phenylalanine 57, arginine 85, threonine 91, arginine 102, and asparagine 112 together coordinate ATP. Histidine 115 (pros-phosphohistidine intermediate) is an active-site residue.

It belongs to the NDK family. As to quaternary structure, homotetramer. The cofactor is Mg(2+).

It localises to the cytoplasm. It catalyses the reaction a 2'-deoxyribonucleoside 5'-diphosphate + ATP = a 2'-deoxyribonucleoside 5'-triphosphate + ADP. The catalysed reaction is a ribonucleoside 5'-diphosphate + ATP = a ribonucleoside 5'-triphosphate + ADP. In terms of biological role, major role in the synthesis of nucleoside triphosphates other than ATP. The ATP gamma phosphate is transferred to the NDP beta phosphate via a ping-pong mechanism, using a phosphorylated active-site intermediate. This Roseiflexus sp. (strain RS-1) protein is Nucleoside diphosphate kinase.